Here is a 272-residue protein sequence, read N- to C-terminus: Ethanolamine ammonia-lyase small subunit (272 aa).

Adenosylcob(III)alamin contacts are provided by Val161, Glu182, and Cys211.

The protein belongs to the EutC family. As to quaternary structure, the basic unit is a heterodimer which dimerizes to form tetramers. The heterotetramers trimerize; 6 large subunits form a core ring with 6 small subunits projecting outwards. Requires adenosylcob(III)alamin as cofactor.

Its subcellular location is the bacterial microcompartment. The enzyme catalyses ethanolamine = acetaldehyde + NH4(+). It participates in amine and polyamine degradation; ethanolamine degradation. Functionally, catalyzes the deamination of various vicinal amino-alcohols to oxo compounds. Allows this organism to utilize ethanolamine as the sole source of nitrogen and carbon in the presence of external vitamin B12. This chain is Ethanolamine ammonia-lyase small subunit, found in Pseudomonas putida (strain W619).